Here is a 208-residue protein sequence, read N- to C-terminus: Mediator of RNA polymerase II transcription subunit 18 (208 aa).

Belongs to the Mediator complex subunit 18 family. Component of the Mediator complex.

The protein resides in the nucleus. Functionally, component of the Mediator complex, a coactivator involved in the regulated transcription of nearly all RNA polymerase II-dependent genes. Mediator functions as a bridge to convey information from gene-specific regulatory proteins to the basal RNA polymerase II transcription machinery. Mediator is recruited to promoters by direct interactions with regulatory proteins and serves as a scaffold for the assembly of a functional preinitiation complex with RNA polymerase II and the general transcription factors. This is Mediator of RNA polymerase II transcription subunit 18 (med18) from Xenopus laevis (African clawed frog).